A 342-amino-acid chain; its full sequence is tRNA dimethylallyltransferase (342 aa).

The span at 1 to 13 (MNDTTAKTLNCSP) shows a compositional bias: polar residues. Residues 1-21 (MNDTTAKTLNCSPASRDGFPE) form a disordered region. 40–47 (GPTGVGKT) is an ATP binding site. Position 42-47 (42-47 (TGVGKT)) interacts with substrate. Interaction with substrate tRNA regions lie at residues 65–68 (DSMQ) and 189–193 (QRILR).

The protein belongs to the IPP transferase family. In terms of assembly, monomer. The cofactor is Mg(2+).

It catalyses the reaction adenosine(37) in tRNA + dimethylallyl diphosphate = N(6)-dimethylallyladenosine(37) in tRNA + diphosphate. In terms of biological role, catalyzes the transfer of a dimethylallyl group onto the adenine at position 37 in tRNAs that read codons beginning with uridine, leading to the formation of N6-(dimethylallyl)adenosine (i(6)A). The polypeptide is tRNA dimethylallyltransferase (Syntrophobacter fumaroxidans (strain DSM 10017 / MPOB)).